A 258-amino-acid chain; its full sequence is Large ribosomal subunit protein bL19m (258 aa).

The disordered stretch occupies residues 235–258; sequence SKGLTGGVGGGGGKQKGQESKKKN. The span at 238-249 shows a compositional bias: gly residues; that stretch reads LTGGVGGGGGKQ.

Belongs to the bacterial ribosomal protein bL19 family. In terms of assembly, component of the mitochondrial large ribosomal subunit (mt-LSU). Mature N.crassa 74S mitochondrial ribosomes consist of a small (37S) and a large (54S) subunit. The 37S small subunit contains a 16S ribosomal RNA (16S mt-rRNA) and 32 different proteins. The 54S large subunit contains a 23S rRNA (23S mt-rRNA) and 42 different proteins.

It localises to the mitochondrion. In terms of biological role, component of the mitochondrial ribosome (mitoribosome), a dedicated translation machinery responsible for the synthesis of mitochondrial genome-encoded proteins, including at least some of the essential transmembrane subunits of the mitochondrial respiratory chain. The mitoribosomes are attached to the mitochondrial inner membrane and translation products are cotranslationally integrated into the membrane. The chain is Large ribosomal subunit protein bL19m (img1) from Neurospora crassa (strain ATCC 24698 / 74-OR23-1A / CBS 708.71 / DSM 1257 / FGSC 987).